The primary structure comprises 394 residues: 3-dehydroquinate synthase (394 aa).

Residues 112–116, 136–137, lysine 149, lysine 158, and 176–179 each bind NAD(+); these read GVIGD, TT, and TLAT. Zn(2+)-binding residues include glutamate 191, histidine 254, and histidine 276. The segment covering 371-388 has biased composition (polar residues); it reads STNQHTTYSPHQHATTKP. A disordered region spans residues 371–394; sequence STNQHTTYSPHQHATTKPPNRRPH.

It belongs to the sugar phosphate cyclases superfamily. Dehydroquinate synthase family. NAD(+) serves as cofactor. It depends on Co(2+) as a cofactor. Zn(2+) is required as a cofactor.

The protein localises to the cytoplasm. The enzyme catalyses 7-phospho-2-dehydro-3-deoxy-D-arabino-heptonate = 3-dehydroquinate + phosphate. The protein operates within metabolic intermediate biosynthesis; chorismate biosynthesis; chorismate from D-erythrose 4-phosphate and phosphoenolpyruvate: step 2/7. Its function is as follows. Catalyzes the conversion of 3-deoxy-D-arabino-heptulosonate 7-phosphate (DAHP) to dehydroquinate (DHQ). The protein is 3-dehydroquinate synthase of Xylella fastidiosa (strain 9a5c).